The primary structure comprises 101 residues: Apolipoprotein C-II (101 aa).

The first 22 residues, 1–22, serve as a signal peptide directing secretion; it reads MGTRFLLALCLVLLVLGFEVQG. Residues 66-74 are lipid binding; it reads AVDEKLRDL. The tract at residues 78–101 is lipoprotein lipase cofactor; the sequence is STAAMSTYTGIFTDQVLSVLKGEE.

Belongs to the apolipoprotein C2 family. In terms of processing, proapolipoprotein C-II is synthesized as a sialic acid containing glycoprotein which is subsequently desialylated prior to its proteolytic processing. Post-translationally, proapolipoprotein C-II, the major form found in plasma undergoes proteolytic cleavage of its N-terminal hexapeptide to generate apolipoprotein C-II, which occurs as the minor form in plasma.

The protein resides in the secreted. Component of chylomicrons, very low-density lipoproteins (VLDL), low-density lipoproteins (LDL), and high-density lipoproteins (HDL) in plasma. Plays an important role in lipoprotein metabolism as an activator of lipoprotein lipase. Both proapolipoprotein C-II and apolipoprotein C-II can activate lipoprotein lipase. This is Apolipoprotein C-II (APOC2) from Colobus guereza (Mantled guereza).